A 79-amino-acid polypeptide reads, in one-letter code: MKLAKTAVLDPATYTSFSPGLSTCSSSQPPGDRRKGLLGCVGSGHCPLPTPAQFPKVQRPPTLLGGKNTSTQTTLHPVI.

The segment at 51–79 (PAQFPKVQRPPTLLGGKNTSTQTTLHPVI) is disordered. Polar residues predominate over residues 67–79 (KNTSTQTTLHPVI).

This is an uncharacterized protein from Homo sapiens (Human).